Consider the following 214-residue polypeptide: tRNA (guanine-N(7)-)-methyltransferase (214 aa).

Residues Glu-44, Glu-69, Asp-96, and Asp-118 each contribute to the S-adenosyl-L-methionine site. Asp-118 is a catalytic residue. Lys-122 lines the substrate pocket. The segment at 124 to 129 (RHEKRR) is interaction with RNA. Substrate contacts are provided by residues Asp-154 and 192–195 (TEYE).

This sequence belongs to the class I-like SAM-binding methyltransferase superfamily. TrmB family.

The catalysed reaction is guanosine(46) in tRNA + S-adenosyl-L-methionine = N(7)-methylguanosine(46) in tRNA + S-adenosyl-L-homocysteine. It functions in the pathway tRNA modification; N(7)-methylguanine-tRNA biosynthesis. Functionally, catalyzes the formation of N(7)-methylguanine at position 46 (m7G46) in tRNA. The polypeptide is tRNA (guanine-N(7)-)-methyltransferase (Lactiplantibacillus plantarum (strain ATCC BAA-793 / NCIMB 8826 / WCFS1) (Lactobacillus plantarum)).